The chain runs to 351 residues: Nicotinate-nucleotide--dimethylbenzimidazole phosphoribosyltransferase (351 aa).

Residue E317 is the Proton acceptor of the active site.

The protein belongs to the CobT family.

The enzyme catalyses 5,6-dimethylbenzimidazole + nicotinate beta-D-ribonucleotide = alpha-ribazole 5'-phosphate + nicotinate + H(+). The protein operates within nucleoside biosynthesis; alpha-ribazole biosynthesis; alpha-ribazole from 5,6-dimethylbenzimidazole: step 1/2. Functionally, catalyzes the synthesis of alpha-ribazole-5'-phosphate from nicotinate mononucleotide (NAMN) and 5,6-dimethylbenzimidazole (DMB). This is Nicotinate-nucleotide--dimethylbenzimidazole phosphoribosyltransferase from Pseudomonas aeruginosa (strain LESB58).